The chain runs to 172 residues: Peptide methionine sulfoxide reductase MsrA (172 aa).

Cys12 is a catalytic residue.

The protein belongs to the MsrA Met sulfoxide reductase family.

It catalyses the reaction L-methionyl-[protein] + [thioredoxin]-disulfide + H2O = L-methionyl-(S)-S-oxide-[protein] + [thioredoxin]-dithiol. The enzyme catalyses [thioredoxin]-disulfide + L-methionine + H2O = L-methionine (S)-S-oxide + [thioredoxin]-dithiol. Has an important function as a repair enzyme for proteins that have been inactivated by oxidation. Catalyzes the reversible oxidation-reduction of methionine sulfoxide in proteins to methionine. The polypeptide is Peptide methionine sulfoxide reductase MsrA (Ligilactobacillus salivarius (strain UCC118) (Lactobacillus salivarius)).